A 364-amino-acid polypeptide reads, in one-letter code: Aminomethyltransferase (364 aa).

The protein belongs to the GcvT family. The glycine cleavage system is composed of four proteins: P, T, L and H.

The enzyme catalyses N(6)-[(R)-S(8)-aminomethyldihydrolipoyl]-L-lysyl-[protein] + (6S)-5,6,7,8-tetrahydrofolate = N(6)-[(R)-dihydrolipoyl]-L-lysyl-[protein] + (6R)-5,10-methylene-5,6,7,8-tetrahydrofolate + NH4(+). In terms of biological role, the glycine cleavage system catalyzes the degradation of glycine. The sequence is that of Aminomethyltransferase from Escherichia coli O81 (strain ED1a).